Here is a 677-residue protein sequence, read N- to C-terminus: DNA ligase (677 aa).

NAD(+) contacts are provided by residues 38-42, 87-88, and Glu121; these read DYDFD and SL. Residue Lys123 is the N6-AMP-lysine intermediate of the active site. Positions 144, 187, 300, and 324 each coordinate NAD(+). Residues Cys418, Cys421, Cys436, and Cys442 each coordinate Zn(2+). The BRCT domain maps to 601 to 677; that stretch reads LINSNFEGLS…ISEEEFEAML (77 aa).

This sequence belongs to the NAD-dependent DNA ligase family. LigA subfamily. Requires Mg(2+) as cofactor. It depends on Mn(2+) as a cofactor.

It catalyses the reaction NAD(+) + (deoxyribonucleotide)n-3'-hydroxyl + 5'-phospho-(deoxyribonucleotide)m = (deoxyribonucleotide)n+m + AMP + beta-nicotinamide D-nucleotide.. In terms of biological role, DNA ligase that catalyzes the formation of phosphodiester linkages between 5'-phosphoryl and 3'-hydroxyl groups in double-stranded DNA using NAD as a coenzyme and as the energy source for the reaction. It is essential for DNA replication and repair of damaged DNA. The sequence is that of DNA ligase from Chlorobium luteolum (strain DSM 273 / BCRC 81028 / 2530) (Pelodictyon luteolum).